The sequence spans 318 residues: Myeloid-associated differentiation marker (318 aa).

MARVEL domains are found at residues 25–157 (ALTQ…ARPG) and 162–315 (YMAT…RLVF). A run of 8 helical transmembrane segments spans residues 35-55 (LLQL…GAWT), 58-78 (MGNW…IILI), 95-115 (FPIT…IIYP), 131-151 (AIAA…EVAW), 165-185 (TVPG…FAFI), 197-217 (LEWC…TVLL), 233-253 (FLSG…VLWP), and 290-310 (LAVS…LVYS).

This sequence belongs to the MAL family.

Its subcellular location is the membrane. This Rattus norvegicus (Rat) protein is Myeloid-associated differentiation marker (Myadm).